Consider the following 286-residue polypeptide: Flagellar filament 33 kDa core protein (286 aa).

The protein belongs to the bacterial flagellin family. The flagellum consists of an outer layer composed of repeating units of FlaA around a core that contains several antigenically related polypeptides.

The protein localises to the periplasmic flagellum. The protein resides in the periplasm. Functionally, component of the core of the flagella. In Treponema phagedenis, this protein is Flagellar filament 33 kDa core protein.